We begin with the raw amino-acid sequence, 160 residues long: MKWVPLSNLHVDVPKDVTRPTITTSDEPDTLYKRLSILVKAHDRAVLDSYEYFAVLAAKELGISIKVHEPPRKIERFTLLKSVHIFKKHRVQYEMRTLYRCLELKHLTGSTASVYLEYIQRNLPEGVAMEVTKTQIQQLPEHIKEPMWETVPEEKKESKS.

Belongs to the universal ribosomal protein uS10 family. As to quaternary structure, component of the mitochondrial ribosome small subunit (28S) which comprises a 12S rRNA and about 30 distinct proteins.

It is found in the mitochondrion. This Mus musculus (Mouse) protein is Small ribosomal subunit protein uS10m (Mrps10).